Reading from the N-terminus, the 805-residue chain is MTVLHWATISPFLLAILIPFLYKYARRIHTGWFVLVLPLVLFIYFIQYLSITSTGGVVEHTIPWVPSLGINFTVFVDGLSLLFALLITGIGTLVILYSIFYLSKKTESLNNFYVYLLMFMGAMLGVVLSDNLIVLYVFWELTSLASSLLISYWFHREKSTYGAQKSMLITVFGGFAMLGGFSLLYVMTGTFSIRGIIENVDLVTSSELFLPAMILVLLGAFTKSAQFPFHIWLPDAMEAPTPVSAYLHSATMVKAGIYLVARLTPVFAGSAEWFWLLTGFGVVTLLWGSTSAVRQKDLKGILAFSTVSQLGLIMTLLGLGSAAIYFGESVDPAFYSFAIMAAIFHLINHATFKGSLFMTAGIIDHETGTRDIRKLGGLMAIMPVTFTVSLIGLASMAGLPPFNGFLSKEMFFTALLRATEMNAFNMETFGIIIVVLAWIASVFTFLYCLIMFFKTFTGKFKPENYDVKVHEAPIGMLISPVILGSLVIVFGFFPNILAYTIIEPAMQAVLPTVLADGELFHVNIYMWHGFNAELFMTMGVVAAGIILFLMMKNWAKAAFYMKERDPLNWFYDSSLSGVITGSQFVTRIQMTGLLRDYFAYMIVFMILLLGYTMFRYDAFAIDTTNVTEIAPYIWVITIVFIVATLSIPFINKRITAVVVVGVIGFLLALLFVVFRAPDLALTQLLIETVTVLLLMLAFYHLPELRKEEFKPRFNVLNLIISIGVGFFITAIALSSLALGNEAGIEPISQFFIENSKELAGGYNMVNVILVDFRGLDTMLEVLVLGIAALGVIALIKLRMTGREDV.

21 helical membrane-spanning segments follow: residues 4–22, 29–51, 80–102, 109–128, 132–154, 167–189, 209–231, 244–266, 271–293, 300–322, 332–354, 375–397, 431–453, 474–496, 529–551, 597–614, 629–651, 656–674, 679–701, 714–736, and 778–795; these read LHWA…PFLY, HTGW…YLSI, SLLF…IFYL, LNNF…GVVL, LIVL…SYWF, MLIT…VMTG, FLPA…PFHI, SAYL…LTPV, AEWF…TSAV, GILA…LGSA, PAFY…TFKG, LGGL…ASMA, IIIV…IMFF, IGML…FPNI, GFNA…FLMM, YFAY…YTMF, IAPY…PFIN, AVVV…FVVF, LALT…FYHL, NVLN…LSSL, and MLEV…IALI.

Belongs to the CPA3 antiporters (TC 2.A.63) subunit A family. In terms of assembly, forms a heterooligomeric complex that consists of seven subunits: MrpA, MrpB, MrpC, MrpD, MrpE, MrpF and MrpG.

The protein localises to the cell membrane. Its function is as follows. Mnh complex is a Na(+)Li(+)/H(+) antiporter involved in Na(+) and/or Li(+) excretion and Na(+) resistance. Na(+)/H(+) antiport consumes a transmembrane electrical potential, and is thus inferred to be electrogenic. Does not transport K(+), Ca(2+) or Mg(2+). This is Na(+)/H(+) antiporter subunit A (mrpA) from Alkalihalophilus pseudofirmus (strain ATCC BAA-2126 / JCM 17055 / OF4) (Bacillus pseudofirmus).